The primary structure comprises 297 residues: tRNA pseudouridine synthase B (297 aa).

The active-site Nucleophile is Asp39.

Belongs to the pseudouridine synthase TruB family. Type 1 subfamily.

It catalyses the reaction uridine(55) in tRNA = pseudouridine(55) in tRNA. Responsible for synthesis of pseudouridine from uracil-55 in the psi GC loop of transfer RNAs. The protein is tRNA pseudouridine synthase B of Lactobacillus gasseri (strain ATCC 33323 / DSM 20243 / BCRC 14619 / CIP 102991 / JCM 1131 / KCTC 3163 / NCIMB 11718 / NCTC 13722 / AM63).